The chain runs to 66 residues: Translational regulator CsrA (66 aa).

It belongs to the CsrA/RsmA family. Homodimer; the beta-strands of each monomer intercalate to form a hydrophobic core, while the alpha-helices form wings that extend away from the core.

It localises to the cytoplasm. Its function is as follows. A key translational regulator that binds mRNA to regulate translation initiation and/or mRNA stability. Mediates global changes in gene expression, shifting from rapid growth to stress survival by linking envelope stress, the stringent response and the catabolite repression systems. Usually binds in the 5'-UTR; binding at or near the Shine-Dalgarno sequence prevents ribosome-binding, repressing translation, binding elsewhere in the 5'-UTR can activate translation and/or stabilize the mRNA. Its function is antagonized by small RNA(s). This Alkalilimnicola ehrlichii (strain ATCC BAA-1101 / DSM 17681 / MLHE-1) protein is Translational regulator CsrA.